The primary structure comprises 342 residues: S-methyl-5'-thioadenosine phosphorylase (342 aa).

Phosphate contacts are provided by residues threonine 51, 99–100 (RH), and 132–133 (SA). Residue methionine 234 participates in substrate binding. Residue serine 235 participates in phosphate binding. 258–260 (DYD) contacts substrate.

Belongs to the PNP/MTAP phosphorylase family. MTAP subfamily. Homotrimer.

The protein localises to the cytoplasm. It localises to the nucleus. The enzyme catalyses S-methyl-5'-thioadenosine + phosphate = 5-(methylsulfanyl)-alpha-D-ribose 1-phosphate + adenine. Its pathway is amino-acid biosynthesis; L-methionine biosynthesis via salvage pathway; S-methyl-5-thio-alpha-D-ribose 1-phosphate from S-methyl-5'-thioadenosine (phosphorylase route): step 1/1. Functionally, catalyzes the reversible phosphorylation of S-methyl-5'-thioadenosine (MTA) to adenine and 5-methylthioribose-1-phosphate. Involved in the breakdown of MTA, a major by-product of polyamine biosynthesis. Responsible for the first step in the methionine salvage pathway after MTA has been generated from S-adenosylmethionine. Has broad substrate specificity with 6-aminopurine nucleosides as preferred substrates. In Aspergillus fumigatus (strain ATCC MYA-4609 / CBS 101355 / FGSC A1100 / Af293) (Neosartorya fumigata), this protein is S-methyl-5'-thioadenosine phosphorylase.